Reading from the N-terminus, the 141-residue chain is VLSPADKSNVKAAWGKVGGHAGDYGAEALERMFLSFPTTKTYFPHFDLSHGSAQVKGHGKKVADALTNAVALVDDMPNALSALSDLHAHKLRVDPVNFKLLSHCLLVTLAAHHPADFTPAVHASLDKFLASVSTVLTSKYR.

The Globin domain maps to 1-141 (VLSPADKSNV…VSTVLTSKYR (141 aa)). A Phosphoserine modification is found at Ser-3. Residues Lys-7 and Lys-11 each carry the N6-succinyllysine modification. An N6-acetyllysine; alternate modification is found at Lys-16. Lys-16 carries the post-translational modification N6-succinyllysine; alternate. Tyr-24 carries the phosphotyrosine modification. Position 35 is a phosphoserine (Ser-35). Lys-40 is modified (N6-succinyllysine). Phosphoserine is present on Ser-49. Residue His-58 coordinates O2. Position 87 (His-87) interacts with heme b. Ser-102 is modified (phosphoserine). At Thr-108 the chain carries Phosphothreonine. 2 positions are modified to phosphoserine: Ser-124 and Ser-131. Residues Thr-134 and Thr-137 each carry the phosphothreonine modification. At Ser-138 the chain carries Phosphoserine.

This sequence belongs to the globin family. As to quaternary structure, heterotetramer of two alpha chains and two beta chains. In terms of tissue distribution, red blood cells.

Functionally, involved in oxygen transport from the lung to the various peripheral tissues. Its function is as follows. Hemopressin acts as an antagonist peptide of the cannabinoid receptor CNR1. Hemopressin-binding efficiently blocks cannabinoid receptor CNR1 and subsequent signaling. This is Hemoglobin subunit alpha (HBA) from Saguinus mystax (Moustached tamarin).